The sequence spans 883 residues: DNA mismatch repair protein MutS (883 aa).

602–609 is a binding site for ATP; the sequence is GPNMSGKS.

This sequence belongs to the DNA mismatch repair MutS family.

This protein is involved in the repair of mismatches in DNA. It is possible that it carries out the mismatch recognition step. This protein has a weak ATPase activity. In Staphylococcus haemolyticus (strain JCSC1435), this protein is DNA mismatch repair protein MutS.